We begin with the raw amino-acid sequence, 566 residues long: MDVENLIITTLKDKVKELTGTEMDIRLEEPPAINMGDYSTNISFRLAKDLKKAPKMIAEDIANSLSISGIERIEAVNGYINFFMNYPDFSKETVSKITSEKENFGKLEKRGEKVILEHTSANPNGPFHIGHGRNMVIGDSLKRILIASGYDVETQYYVNDMGRQEAIVVFGNERFELDKSKKADHAIGEVYVETNKLLAENEELEQEILNLMKNYESACEAGIENELTEKFKNAVDYSLGGFKETLSTLNIYHDKFVWESEFVKSGMVRDVIKRLMDTGKVVEDEVFRLDLSDYGLEKKLVLARLNGTSLYSTRDIAYHINKMENCDFAVNLLGADHKLTAVLVNKTLALLGYNEAEVVFYEFISLPEGSMSTRRGRFISMDELFEEAKSRAAEEVRKRGVAQSEEEIEEIAKKIAVGAVRYNIVRIAPEKPMVFRWDEALDFEKVGCPVIQYAHARCSRILENVENISNDNLFAYEMNENEKTIVKLLSKLPKIVEKAAEVRKPQIVANYVLDVAQGFNKFYANCPVLKEENETIKNSRLAIVSTTKTVLENTLDLLGIEMPGKM.

The 'HIGH' region signature appears at 121 to 131; that stretch reads ANPNGPFHIGH.

This sequence belongs to the class-I aminoacyl-tRNA synthetase family.

It localises to the cytoplasm. The enzyme catalyses tRNA(Arg) + L-arginine + ATP = L-arginyl-tRNA(Arg) + AMP + diphosphate. In Methanococcus maripaludis (strain C6 / ATCC BAA-1332), this protein is Arginine--tRNA ligase.